Consider the following 200-residue polypeptide: SKP1-like protein 19 (200 aa).

A compositionally biased stretch (basic and acidic residues) spans D67 to D92. The interval D67–K109 is disordered. The interaction with the F-box domain of F-box proteins stretch occupies residues I132 to E190.

This sequence belongs to the SKP1 family. As to quaternary structure, part of a SCF (SKP1-cullin-F-box) protein ligase complex. Interacts with CPR1/CPR30. Expressed in leaves and flowers.

The protein resides in the nucleus. It participates in protein modification; protein ubiquitination. Its function is as follows. Involved in ubiquitination and subsequent proteasomal degradation of target proteins. Together with CUL1, RBX1 and a F-box protein, it forms a SCF E3 ubiquitin ligase complex. The functional specificity of this complex depends on the type of F-box protein. In the SCF complex, it serves as an adapter that links the F-box protein to CUL1. This Arabidopsis thaliana (Mouse-ear cress) protein is SKP1-like protein 19 (ASK19).